The chain runs to 55 residues: Methylmalonyl-CoA decarboxylase subunit epsilon (55 aa).

In terms of assembly, the methylmalonyl-CoA decarboxylase is composed of five subunits: the carboxyltransferase alpha subunit (MmdA), the tunnel beta subunit (MmdB), the biotin-containing gamma subunit (MmdC), and the delta (MmdD) and epsilon (MmdE) subunits.

The protein localises to the cell membrane. The enzyme catalyses (S)-methylmalonyl-CoA + Na(+)(in) + H(+)(out) = propanoyl-CoA + Na(+)(out) + CO2. Its activity is regulated as follows. Completely inhibited by avidin. Subunit of the sodium ion pump methylmalonyl-CoA decarboxylase, which converts the chemical energy of a decarboxylation reaction into an electrochemical gradient of Na(+) ions across the cytoplasmic membrane, thereby creating a sodium ion motive force that is used for ATP synthesis. The epsilon subunit seems not important for the catalysis of either decarboxylation or Na(+) transport, but it improves binding of the alpha subunit and plays an important role in stabilizing the methylmalonyl-CoA-decarboxylase enzyme complex. Can also convert malonyl-CoA into acetyl-CoA. The protein is Methylmalonyl-CoA decarboxylase subunit epsilon of Veillonella parvula (Staphylococcus parvulus).